A 344-amino-acid chain; its full sequence is uncharacterized protein (344 aa).

Positions Lys-323–Arg-332 are enriched in basic and acidic residues. The segment at Lys-323–Arg-344 is disordered.

This is an uncharacterized protein from Bacillus anthracis.